Consider the following 131-residue polypeptide: Transcription antitermination protein NusB (131 aa).

It belongs to the NusB family.

Involved in transcription antitermination. Required for transcription of ribosomal RNA (rRNA) genes. Binds specifically to the boxA antiterminator sequence of the ribosomal RNA (rrn) operons. The protein is Transcription antitermination protein NusB of Bacillus pumilus (strain SAFR-032).